Reading from the N-terminus, the 320-residue chain is Acetaldehyde dehydrogenase 2 (320 aa).

Cys-129 acts as the Acyl-thioester intermediate in catalysis. Residues 160–168 and Asn-287 each bind NAD(+); that span reads SAGPGTRAN.

It belongs to the acetaldehyde dehydrogenase family.

It carries out the reaction acetaldehyde + NAD(+) + CoA = acetyl-CoA + NADH + H(+). The protein is Acetaldehyde dehydrogenase 2 of Burkholderia cenocepacia (strain ATCC BAA-245 / DSM 16553 / LMG 16656 / NCTC 13227 / J2315 / CF5610) (Burkholderia cepacia (strain J2315)).